The primary structure comprises 387 residues: MSVIKMTDLDLAGKRVLIRADLNVPVKEGKVTSDARIRASLPTIEAALKQGAKVMVTSHLGRPTEGEYNEEFSLLPVVNYLKEKLGAENVSLAKDYLDGVELAAGKLVVLENVRFNKGEKKDDETLSKKYAALCDIFVMDAFGTAHRAQASTHGVGKFAPVACAGPLLSAELEALGKALKSPARPMVAVVGGSKVSTKFDVLNSLVKIADTVIVGGGIANTFVAIENNVGKSLYEPDFVDAAKKLRDEYGIPVPVDSRVGTEFSETAPSTVKKVSEVQDNEEIMDFGDETALAMANLLKDAKTILWNGPVGVFEFPNFRKGTEIVANAIADSDAFSIAGGGDTLAAIDLFGIEDKISYISTGGGAFLEFVEGKVLPAVAMLEERAKQ.

Substrate contacts are provided by residues 21 to 23, R36, 59 to 62, R114, and R147; these read DLN and HLGR. ATP contacts are provided by residues K198, E314, and 340-343; that span reads GGDT.

It belongs to the phosphoglycerate kinase family. As to quaternary structure, monomer.

It localises to the cytoplasm. It catalyses the reaction (2R)-3-phosphoglycerate + ATP = (2R)-3-phospho-glyceroyl phosphate + ADP. It participates in carbohydrate degradation; glycolysis; pyruvate from D-glyceraldehyde 3-phosphate: step 2/5. The polypeptide is Phosphoglycerate kinase (Erwinia tasmaniensis (strain DSM 17950 / CFBP 7177 / CIP 109463 / NCPPB 4357 / Et1/99)).